A 265-amino-acid chain; its full sequence is Zinc import ATP-binding protein ZnuC (265 aa).

Residues 6–221 (IRLEQVAVTL…PAFVELFGKN (216 aa)) enclose the ABC transporter domain. 38–45 (GPNGAGKT) contributes to the ATP binding site. The interval 245–265 (DAPATSSHTHTHVHGDHCKHG) is disordered.

The protein belongs to the ABC transporter superfamily. Zinc importer (TC 3.A.1.15.5) family. As to quaternary structure, the complex is composed of two ATP-binding proteins (ZnuC), two transmembrane proteins (ZnuB) and a solute-binding protein (ZnuA).

It localises to the cell inner membrane. It carries out the reaction Zn(2+)(out) + ATP(in) + H2O(in) = Zn(2+)(in) + ADP(in) + phosphate(in) + H(+)(in). Part of the ABC transporter complex ZnuABC involved in zinc import. Responsible for energy coupling to the transport system. The chain is Zinc import ATP-binding protein ZnuC from Pseudomonas savastanoi pv. phaseolicola (strain 1448A / Race 6) (Pseudomonas syringae pv. phaseolicola (strain 1448A / Race 6)).